We begin with the raw amino-acid sequence, 32 residues long: Beta-hexosaminidase (32 aa).

The GH18 domain maps to 1–32 (GKSSSRPLGDATLGDLDFDIEVTQDYWDDLAR). The Proton donor role is filled by glutamate 21.

It belongs to the glycosyl hydrolase 18 family. Chitinase class II subfamily.

It carries out the reaction Hydrolysis of terminal non-reducing N-acetyl-D-hexosamine residues in N-acetyl-beta-D-hexosaminides.. Its activity is regulated as follows. Activity is decreased by HgCl(2) and maltose. Activity is stimulated by Na(2)SeO(4), BaCl(2), MgCl(2), chondroitin 6-sulfate and phenylmethylsulfonyl fluoride. Preferentially hydrolyzes pNP-GlcNAc, hydrolyzes pNP-GalNAc to a lesser extent. This is Beta-hexosaminidase from Palythoa caribaeorum (White encrusting zoanthid coral).